The sequence spans 85 residues: Large ribosomal subunit protein bL27 (85 aa).

Residues 1–20 (MAHKKAAGSTRNGRDSEAKR) form a disordered region.

This sequence belongs to the bacterial ribosomal protein bL27 family.

This Colwellia psychrerythraea (strain 34H / ATCC BAA-681) (Vibrio psychroerythus) protein is Large ribosomal subunit protein bL27.